A 382-amino-acid chain; its full sequence is uncharacterized protein (382 aa).

Helical transmembrane passes span 14–34, 45–65, 75–95, 102–122, 131–151, 157–177, 206–226, 235–255, 270–290, 291–311, 325–345, and 348–368; these read GLLLLTLAIAVLNTLVPLWLA, VVSSSYFTGNLVGTLLTGYVI, YLASFIFAAGCAGLGLMIGFW, FVAGVGCAMIWVVVESALMCS, LLAAYMMVYYVGTFLGQLLVS, LMSVLPWVTGLTLAGILPLLF, VNGCIISGIVLGSLYGLMPLF, ASIGFWMAVLVSAGILGQWPI, VQVFVVILGSIAMLSQAAMAP, ALFILGAAGFTLYPVAMAWAC, ALLLSYTVGSLLGPSFTAMLM, and FSDNLLFIMIASVSFIYLLML.

The protein belongs to the major facilitator superfamily. YcaD (TC 2.A.1.26) family.

The protein resides in the cell inner membrane. This is an uncharacterized protein from Escherichia coli O17:K52:H18 (strain UMN026 / ExPEC).